We begin with the raw amino-acid sequence, 95 residues long: Co-chaperonin GroES (95 aa).

The protein belongs to the GroES chaperonin family. In terms of assembly, heptamer of 7 subunits arranged in a ring. Interacts with the chaperonin GroEL.

The protein localises to the cytoplasm. Together with the chaperonin GroEL, plays an essential role in assisting protein folding. The GroEL-GroES system forms a nano-cage that allows encapsulation of the non-native substrate proteins and provides a physical environment optimized to promote and accelerate protein folding. GroES binds to the apical surface of the GroEL ring, thereby capping the opening of the GroEL channel. The polypeptide is Co-chaperonin GroES (Syntrophotalea carbinolica (strain DSM 2380 / NBRC 103641 / GraBd1) (Pelobacter carbinolicus)).